The primary structure comprises 345 residues: Thylakoid lumenal 29 kDa protein, chloroplastic (345 aa).

Belongs to the peroxidase family.

The protein localises to the plastid. The protein resides in the chloroplast thylakoid lumen. The sequence is that of Thylakoid lumenal 29 kDa protein, chloroplastic (CLEB3J9) from Solanum lycopersicum (Tomato).